A 148-amino-acid chain; its full sequence is NADPH-dependent 7-cyano-7-deazaguanine reductase (148 aa).

C50 acts as the Thioimide intermediate in catalysis. Residue D57 is the Proton donor of the active site. Substrate is bound by residues 72 to 74 and 91 to 92; these read VES and HE.

It belongs to the GTP cyclohydrolase I family. QueF type 1 subfamily.

The protein localises to the cytoplasm. The enzyme catalyses 7-aminomethyl-7-carbaguanine + 2 NADP(+) = 7-cyano-7-deazaguanine + 2 NADPH + 3 H(+). It participates in tRNA modification; tRNA-queuosine biosynthesis. Functionally, catalyzes the NADPH-dependent reduction of 7-cyano-7-deazaguanine (preQ0) to 7-aminomethyl-7-deazaguanine (preQ1). The protein is NADPH-dependent 7-cyano-7-deazaguanine reductase of Helicobacter pylori (strain HPAG1).